The following is a 61-amino-acid chain: Large ribosomal subunit protein uL30 (61 aa).

This sequence belongs to the universal ribosomal protein uL30 family. Part of the 50S ribosomal subunit.

This is Large ribosomal subunit protein uL30 from Corynebacterium diphtheriae (strain ATCC 700971 / NCTC 13129 / Biotype gravis).